We begin with the raw amino-acid sequence, 869 residues long: Iron-sulfur cluster assembly SufBD family protein ML0593 (869 aa).

The DOD-type homing endonuclease domain maps to 344-477 (LLGLWLGDGH…VRQLAIGCGL (134 aa)).

It belongs to the iron-sulfur cluster assembly SufBD family. In terms of processing, this protein undergoes a protein self splicing that involves a post-translational excision of the intervening region (intein) followed by peptide ligation.

The chain is Iron-sulfur cluster assembly SufBD family protein ML0593 from Mycobacterium leprae (strain TN).